We begin with the raw amino-acid sequence, 501 residues long: G protein-activated inward rectifier potassium channel 1 (501 aa).

Positions 1–40 are disordered; it reads MSALRRKFGDDYQVVTTSSSGSGLQPQGPGQDPQQQLVPK. Topologically, residues 1 to 80 are cytoplasmic; that stretch reads MSALRRKFGD…LFTTLVDLKW (80 aa). Low complexity predominate over residues 18–38; the sequence is SSSGSGLQPQGPGQDPQQQLV. The helical transmembrane segment at 81-105 threads the bilayer; the sequence is RWNLFIFILTYTVAWLFMASMWWVI. Residues 106–129 are Extracellular-facing; sequence AYTRGDLNKAHVGNYTPCVANVYN. The N-linked (GlcNAc...) asparagine glycan is linked to N119. Residues 130–141 constitute an intramembrane region (helical; Pore-forming); that stretch reads FPSAFLFFIETE. Positions 142–148 form an intramembrane region, pore-forming; sequence ATIGYGY. The Selectivity filter motif lies at 143-148; it reads TIGYGY. Residues 149–157 lie on the Extracellular side of the membrane; sequence RYITDKCPE. Residues 158–179 traverse the membrane as a helical segment; sequence GIILFLFQSILGSIVDAFLIGC. The Cytoplasmic portion of the chain corresponds to 180-501; that stretch reads MFIKMSQPKK…LRKMNSDRFT (322 aa). The polyphosphoinositide (PIP2)-binding stretch occupies residues 182–209; the sequence is IKMSQPKKRAETLMFSEHAVISMRDGKL. A phosphoserine mark is found at S385 and S424.

It belongs to the inward rectifier-type potassium channel (TC 1.A.2.1) family. KCNJ3 subfamily. In terms of assembly, associates with KCNJ5/GIRK4 or KCNJ6/GIRK2 to form a G-protein activated heteromultimer pore-forming unit. The resulting inward current is much larger. Associates with KCNJ9/GIRK3 to form a G-protein activated heteromultimer pore-forming unit.

The protein resides in the membrane. The enzyme catalyses K(+)(in) = K(+)(out). Its activity is regulated as follows. Heteromultimer composed of KCNJ3/GIRK1 and KCNJ5/GIRK4 is activated by phosphatidylinositol 4,5 biphosphate (PtdIns(4,5)P2). Its function is as follows. Inward rectifier potassium channels are characterized by a greater tendency to allow potassium to flow into the cell rather than out of it. Their voltage dependence is regulated by the concentration of extracellular potassium; as external potassium is raised, the voltage range of the channel opening shifts to more positive voltages. The inward rectification is mainly due to the blockage of outward current by internal magnesium. This potassium channel is controlled by G proteins. This receptor plays a crucial role in regulating the heartbeat. This Homo sapiens (Human) protein is G protein-activated inward rectifier potassium channel 1 (KCNJ3).